Reading from the N-terminus, the 714-residue chain is Ribonucleoside-diphosphate reductase 2 subunit alpha (714 aa).

Substrate is bound by residues threonine 161, 177-178 (SC), glycine 206, 386-390 (NLCSE), and 588-592 (PTGSI). Cysteine 178 and cysteine 415 form a disulfide bridge. Asparagine 386 acts as the Proton acceptor in catalysis. The active-site Cysteine radical intermediate is the cysteine 388. The active-site Proton acceptor is glutamate 390.

It belongs to the ribonucleoside diphosphate reductase large chain family. Tetramer of two alpha and two beta subunits.

It carries out the reaction a 2'-deoxyribonucleoside 5'-diphosphate + [thioredoxin]-disulfide + H2O = a ribonucleoside 5'-diphosphate + [thioredoxin]-dithiol. With respect to regulation, under complex allosteric control mediated by deoxynucleoside triphosphates and ATP binding. The type of nucleotide bound at the specificity site determines substrate preference. It seems probable that ATP makes the enzyme reduce CDP and UDP, dGTP favors ADP reduction and dTTP favors GDP reduction. Lacks the N-terminal activity site. Functionally, provides the precursors necessary for DNA synthesis. Catalyzes the biosynthesis of deoxyribonucleotides from the corresponding ribonucleotides. R1E contains the binding sites for both substrates and allosteric effectors and carries out the actual reduction of the ribonucleotide. This Salmonella typhimurium (strain LT2 / SGSC1412 / ATCC 700720) protein is Ribonucleoside-diphosphate reductase 2 subunit alpha (nrdE).